We begin with the raw amino-acid sequence, 225 residues long: tRNA (guanine-N(1)-)-methyltransferase (225 aa).

S-adenosyl-L-methionine contacts are provided by residues Gly-112 and Ile-132–Leu-137.

The protein belongs to the RNA methyltransferase TrmD family. As to quaternary structure, homodimer.

The protein resides in the cytoplasm. It catalyses the reaction guanosine(37) in tRNA + S-adenosyl-L-methionine = N(1)-methylguanosine(37) in tRNA + S-adenosyl-L-homocysteine + H(+). Its function is as follows. Specifically methylates guanosine-37 in various tRNAs. This Porphyromonas gingivalis (strain ATCC BAA-308 / W83) protein is tRNA (guanine-N(1)-)-methyltransferase.